Consider the following 403-residue polypeptide: UPF0229 protein CKR_0568 (403 aa).

Residues Ser-71–Asp-109 form a disordered region. Residues Ser-80 to Lys-97 show a composition bias toward basic and acidic residues.

It belongs to the UPF0229 family.

The sequence is that of UPF0229 protein CKR_0568 from Clostridium kluyveri (strain NBRC 12016).